A 639-amino-acid chain; its full sequence is Protein phosphatase 2C 35 (639 aa).

A PPM-type phosphatase domain is found at 227–630; that stretch reads GGDPCGLQWA…DDVSVIVISL (404 aa). Mn(2+)-binding residues include Asp-262 and Gly-263. The segment at 295 to 341 is disordered; sequence QNVQHDQRPDQPGSAPSTTASDNQDQWGRRRRTRRSRPPRGADDDQR. Residues 308–320 show a composition bias toward polar residues; sequence SAPSTTASDNQDQ. Residues 323–332 are compositionally biased toward basic residues; that stretch reads RRRRTRRSRP. Residues Asp-558 and Asp-621 each coordinate Mn(2+).

This sequence belongs to the PP2C family. As to quaternary structure, interacts with XA21 (via juxtamembrane and kinase domains). It depends on Mg(2+) as a cofactor. Mn(2+) serves as cofactor.

It localises to the cell membrane. It catalyses the reaction O-phospho-L-seryl-[protein] + H2O = L-seryl-[protein] + phosphate. It carries out the reaction O-phospho-L-threonyl-[protein] + H2O = L-threonyl-[protein] + phosphate. Functionally, protein phosphatase that acts on XA21 pathogen recognition receptor. Negatively regulates cell death and XA21-mediated innate immunity. This is Protein phosphatase 2C 35 (XB15) from Oryza sativa subsp. japonica (Rice).